The primary structure comprises 149 residues: MEKIIAENRKAYHDYHILEKYEAGIALKGTEVKSIRLGRVNLRDSFARIENGELWLYNMHISPYEQGNRFNHEPKRPRKLLMHKREIMRLFGKTREKGLTLVPLKLYFKGNYAKIELGLAKGKKIYDKREEMAKRDAAREIEKALRARY.

Belongs to the SmpB family.

The protein resides in the cytoplasm. Required for rescue of stalled ribosomes mediated by trans-translation. Binds to transfer-messenger RNA (tmRNA), required for stable association of tmRNA with ribosomes. tmRNA and SmpB together mimic tRNA shape, replacing the anticodon stem-loop with SmpB. tmRNA is encoded by the ssrA gene; the 2 termini fold to resemble tRNA(Ala) and it encodes a 'tag peptide', a short internal open reading frame. During trans-translation Ala-aminoacylated tmRNA acts like a tRNA, entering the A-site of stalled ribosomes, displacing the stalled mRNA. The ribosome then switches to translate the ORF on the tmRNA; the nascent peptide is terminated with the 'tag peptide' encoded by the tmRNA and targeted for degradation. The ribosome is freed to recommence translation, which seems to be the essential function of trans-translation. This chain is SsrA-binding protein, found in Carboxydothermus hydrogenoformans (strain ATCC BAA-161 / DSM 6008 / Z-2901).